The primary structure comprises 181 residues: K99 fimbrial protein (181 aa).

Positions 1-22 (MKKTLLAIILGGMAFATTNASA) are cleaved as a signal peptide. Cysteines 38 and 79 form a disulfide.

This sequence belongs to the fimbrial protein family.

The protein resides in the fimbrium. In terms of biological role, fimbriae (also called pili), polar filaments radiating from the surface of the bacterium to a length of 0.5-1.5 micrometers and numbering 100-300 per cell, enable bacteria to colonize the epithelium of specific host organs. FanC is the main component of the K99 fimbriae. In Escherichia coli, this protein is K99 fimbrial protein (fanC).